The primary structure comprises 322 residues: Alanine dehydrogenase (322 aa).

Lysine 65 functions as the Proton donor/acceptor in the catalytic mechanism. NAD(+)-binding positions include arginine 108, 135-136 (TQ), 157-159 (DVR), 217-219 (GAD), lysine 223, and serine 290.

This sequence belongs to the ornithine cyclodeaminase/mu-crystallin family. Archaeal alanine dehydrogenase subfamily. In terms of assembly, homodimer.

It catalyses the reaction L-alanine + NAD(+) + H2O = pyruvate + NH4(+) + NADH + H(+). Catalyzes the NAD(+)-dependent oxidative deamination of L-alanine to pyruvate, and the reverse reaction, the reductive amination of pyruvate. Its physiological role is not known. Cannot use NADP(+) instead of NAD(+) as a cosubstrate. In the deamination direction, can also efficiently use L-2-aminobutyrate as substrate. In the reductive amination direction, also exhibits high activity with 2-oxobutyrate and oxaloacetate as substrate. In contrast to bacterial homologs, does not exhibit any ornithine cyclodeaminase activity. The chain is Alanine dehydrogenase from Archaeoglobus fulgidus (strain ATCC 49558 / DSM 4304 / JCM 9628 / NBRC 100126 / VC-16).